Reading from the N-terminus, the 190-residue chain is Vascular endothelial growth factor A (190 aa).

Residues 1-26 form the signal peptide; sequence MNFLLSWVHWSLALLLYLHHAKWSQA. 3 cysteine pairs are disulfide-bonded: Cys-51-Cys-93, Cys-82-Cys-127, and Cys-86-Cys-129. Residue Asn-100 is glycosylated (N-linked (GlcNAc...) asparagine).

It belongs to the PDGF/VEGF growth factor family. In terms of assembly, homodimer; disulfide-linked. Also found as heterodimer with PGF. Interacts with NRP1. Interacts with BSG. Interacts with CD82; this interaction inhibits VEGFA-mediated signaling pathway.

It localises to the secreted. In terms of biological role, growth factor active in angiogenesis, vasculogenesis and endothelial cell growth. Induces endothelial cell proliferation, promotes cell migration, inhibits apoptosis and induces permeabilization of blood vessels. Binds to the FLT1/VEGFR1 and KDR/VEGFR2 receptors, heparan sulfate and heparin. Binding to NRP1 receptor initiates a signaling pathway needed for motor neuron axon guidance and cell body migration, including for the caudal migration of facial motor neurons from rhombomere 4 to rhombomere 6 during embryonic development. Also binds the DEAR/FBXW7-AS1 receptor. The polypeptide is Vascular endothelial growth factor A (VEGFA) (Bos taurus (Bovine)).